We begin with the raw amino-acid sequence, 630 residues long: Chaperone protein HtpG (630 aa).

The tract at residues 1–338 (MTVEANKETL…SNDLSLNVSR (338 aa)) is a; substrate-binding. A b region spans residues 339–555 (EILQNDSTVE…QFDMGAQMKK (217 aa)). Residues 556–630 (IMEAAGQKVP…LNRLLLELAN (75 aa)) form a c region.

This sequence belongs to the heat shock protein 90 family. As to quaternary structure, homodimer.

The protein localises to the cytoplasm. Functionally, molecular chaperone. Has ATPase activity. In Marinobacter nauticus (strain ATCC 700491 / DSM 11845 / VT8) (Marinobacter aquaeolei), this protein is Chaperone protein HtpG.